A 469-amino-acid chain; its full sequence is Beta-1,3-xylanase (469 aa).

A signal peptide spans Met1–Ala22. The 271-residue stretch at Leu23–Asp293 folds into the GH26 domain. Glu138 serves as the catalytic Proton donor. The active-site Nucleophile is the Glu234. Residues Asp352–Gly374 show a composition bias toward gly residues. The segment at Asp352–Glu380 is disordered. Positions Glu377–Asn469 are carbohydrate binding module (CBM). 2 disulfides stabilise this stretch: Cys382–Cys468 and Cys413–Cys418.

Belongs to the glycosyl hydrolase 26 family.

It catalyses the reaction Random hydrolysis of (1-&gt;3)-beta-D-glycosidic linkages in (1-&gt;3)-beta-D-xylans.. With respect to regulation, completely inhibited by CuCl(2), FeCl(3), HgCl(2) and N-bromosuccinimide. Moderately inhibited by AgCl, AlCl(3), Pb(CH(3)COO)(2) and dithiothreitol. BaCl(2), CaCl(2), KCl, MgCl(2), MnCl(2), NaCl, ZnCl(2), ethylenediaminetetraacetic acid, N-ethylmaleimide, iodoacetic acid and p-chloromercuribenzoic acid have little or no effect on activity. In terms of biological role, catalyzes the hydrolysis of beta-1,3-xylan into oligosaccharides, mainly xylotriose and xylobiose with smaller amounts of xylotetraose, xylose, xylopentaose and xylohexaose. Does not hydrolyze xylobiose, p-nitrophenyl-beta-xyloside, beta-1,4-xylan, carboxymethylcellulose, curdlan, glucomannan or beta-1,4-mannan. The chain is Beta-1,3-xylanase from Alcaligenes sp.